The chain runs to 82 residues: RNA-binding protein Hfq (82 aa).

A Sm domain is found at 9–68 (DPYLNTLRKERVPVSIYLVNGIKLQGQIESFDQFVILLKNTVSQMVYKHAISTVVPSRPV).

Belongs to the Hfq family. Homohexamer.

In terms of biological role, RNA chaperone that binds small regulatory RNA (sRNAs) and mRNAs to facilitate mRNA translational regulation in response to envelope stress, environmental stress and changes in metabolite concentrations. Also binds with high specificity to tRNAs. The protein is RNA-binding protein Hfq of Pseudomonas aeruginosa (strain LESB58).